Here is a 684-residue protein sequence, read N- to C-terminus: Probable metal-nicotianamine transporter YSL9 (684 aa).

Residues 1–10 show a composition bias toward basic residues; the sequence is MKQERRRKRQ. The disordered stretch occupies residues 1–55; it reads MKQERRRKRQPGPPRLELVVAHPREEEMAGLDGGGDAEEGATHARGGGGAPPPWR. A run of 14 helical transmembrane segments spans residues 58-78, 82-102, 130-150, 174-194, 234-254, 295-315, 341-361, 402-422, 430-450, 462-482, 515-535, 568-588, 612-632, and 642-662; these read LTAR…VIVM, LTTG…FVVL, CAVA…LLGL, GIAW…LALV, VNGF…QWFY, LVNL…WPLI, FICV…IVAL, LAFS…PMMF, VVIA…GAGL, IALF…AGLV, IIAQ…TFFL, FSAL…FAVA, VPFL…LIVF, and AALM…LWIF.

This sequence belongs to the YSL (TC 2.A.67.2) family.

The protein localises to the membrane. In terms of biological role, may be involved in the transport of nicotianamine-chelated metals. The protein is Probable metal-nicotianamine transporter YSL9 (YSL9) of Oryza sativa subsp. japonica (Rice).